The sequence spans 356 residues: Phosphate acyltransferase (356 aa).

It belongs to the PlsX family. In terms of assembly, homodimer. Probably interacts with PlsY.

It localises to the cytoplasm. The catalysed reaction is a fatty acyl-[ACP] + phosphate = an acyl phosphate + holo-[ACP]. It functions in the pathway lipid metabolism; phospholipid metabolism. Functionally, catalyzes the reversible formation of acyl-phosphate (acyl-PO(4)) from acyl-[acyl-carrier-protein] (acyl-ACP). This enzyme utilizes acyl-ACP as fatty acyl donor, but not acyl-CoA. In Xanthobacter autotrophicus (strain ATCC BAA-1158 / Py2), this protein is Phosphate acyltransferase.